Reading from the N-terminus, the 86-residue chain is Small ribosomal subunit protein bS16 (86 aa).

It belongs to the bacterial ribosomal protein bS16 family.

This Borreliella burgdorferi (strain ATCC 35210 / DSM 4680 / CIP 102532 / B31) (Borrelia burgdorferi) protein is Small ribosomal subunit protein bS16.